The sequence spans 208 residues: Inosine triphosphate pyrophosphatase (208 aa).

A2 carries the N-acetylalanine modification. An ITP-binding site is contributed by 14–19 (TGNAKK). E44 provides a ligand contact to Mg(2+). Residues K56, 72–73 (DT), K89, 149–152 (FGWD), K172, and 177–178 (HR) each bind ITP.

This sequence belongs to the HAM1 NTPase family. As to quaternary structure, homodimer. Mg(2+) is required as a cofactor. Mn(2+) serves as cofactor.

It is found in the cytoplasm. The enzyme catalyses ITP + H2O = IMP + diphosphate + H(+). The catalysed reaction is dITP + H2O = dIMP + diphosphate + H(+). It carries out the reaction XTP + H2O = XMP + diphosphate + H(+). It catalyses the reaction N(6)-hydroxy-dATP + H2O = N(6)-hydroxy-dAMP + diphosphate + H(+). In terms of biological role, pyrophosphatase that hydrolyzes the non-canonical purine nucleotides inosine triphosphate (ITP), deoxyinosine triphosphate (dITP) as well as 2'-deoxy-N-6-hydroxylaminopurine triphosphate (dHAPTP) and xanthosine 5'-triphosphate (XTP) to their respective monophosphate derivatives. The enzyme does not distinguish between the deoxy- and ribose forms. Probably excludes non-canonical purines from RNA and DNA precursor pools, thus preventing their incorporation into RNA and DNA and avoiding chromosomal lesions. The chain is Inosine triphosphate pyrophosphatase from Bos taurus (Bovine).